The following is a 165-amino-acid chain: SsrA-binding protein (165 aa).

The protein belongs to the SmpB family.

The protein localises to the cytoplasm. Functionally, required for rescue of stalled ribosomes mediated by trans-translation. Binds to transfer-messenger RNA (tmRNA), required for stable association of tmRNA with ribosomes. tmRNA and SmpB together mimic tRNA shape, replacing the anticodon stem-loop with SmpB. tmRNA is encoded by the ssrA gene; the 2 termini fold to resemble tRNA(Ala) and it encodes a 'tag peptide', a short internal open reading frame. During trans-translation Ala-aminoacylated tmRNA acts like a tRNA, entering the A-site of stalled ribosomes, displacing the stalled mRNA. The ribosome then switches to translate the ORF on the tmRNA; the nascent peptide is terminated with the 'tag peptide' encoded by the tmRNA and targeted for degradation. The ribosome is freed to recommence translation, which seems to be the essential function of trans-translation. The polypeptide is SsrA-binding protein (Parvibaculum lavamentivorans (strain DS-1 / DSM 13023 / NCIMB 13966)).